We begin with the raw amino-acid sequence, 427 residues long: tRNA pseudouridine synthase Pus10 (427 aa).

Aspartate 240 (nucleophile) is an active-site residue. Substrate contacts are provided by tyrosine 306 and tyrosine 378.

This sequence belongs to the pseudouridine synthase Pus10 family.

It carries out the reaction uridine(54) in tRNA = pseudouridine(54) in tRNA. The enzyme catalyses uridine(55) in tRNA = pseudouridine(55) in tRNA. Responsible for synthesis of pseudouridine from uracil-54 and uracil-55 in the psi GC loop of transfer RNAs. This is tRNA pseudouridine synthase Pus10 from Halorubrum lacusprofundi (strain ATCC 49239 / DSM 5036 / JCM 8891 / ACAM 34).